Reading from the N-terminus, the 312-residue chain is Envelope glycoprotein K (312 aa).

Residues 1–20 (MLLGGRPLHLLVLGVMGAYA) form the signal peptide. The Extracellular portion of the chain corresponds to 21–91 (GLGAYYATVA…VVYARRDCRA (71 aa)). N-linked (GlcNAc...) asparagine; by host glycans are attached at residues N58 and N67. The chain crosses the membrane as a helical span at residues 92-112 (YLWDVHFRLAAVAWLLYAAFV). The Cytoplasmic segment spans residues 113–187 (YARQERRMFG…DPITLAHRHP (75 aa)). Residues 188–208 (TLIALILLELGLRLGARMALF) traverse the membrane as a helical segment. Residues 209 to 227 (TTLGVTRAPCALVFPLYAR) are Extracellular-facing. The chain crosses the membrane as a helical span at residues 228–248 (ALVWIFVLAVGALELLAATLP). Topologically, residues 249–280 (HIARVSGATATPARSDGGRAALGVCGACCSTV) are cytoplasmic. Residues 281–301 (LAGIFAKALYLCLLVGGVLLF) traverse the membrane as a helical segment. Topologically, residues 302-312 (LHYERHITIFG) are extracellular.

The protein belongs to the alphaherpesvirinae glycoprotein K family. Interacts (via UL20 interaction region) with protein UL20 homolog (via N-terminus); this interaction probably plays a role in the coordinate transport of protein UL20 homolog and gK to the trans-Golgi network (TGN), and is required for the cell surface expression of gK. In terms of processing, N-glycosylated.

It localises to the host cell membrane. The protein resides in the host endosome membrane. Its subcellular location is the host Golgi apparatus membrane. Glycoprotein that probably modulates membrane fusion events during secondary envelopment of cytoplasmic capsids that bud into specific trans-Golgi network (TGN)-derived membranes. In Sus scrofa (Pig), this protein is Envelope glycoprotein K (gK).